The sequence spans 338 residues: 5-dehydro-2-deoxygluconokinase (338 aa).

This sequence belongs to the carbohydrate kinase PfkB family.

The catalysed reaction is 5-dehydro-2-deoxy-D-gluconate + ATP = 6-phospho-5-dehydro-2-deoxy-D-gluconate + ADP + H(+). The protein operates within polyol metabolism; myo-inositol degradation into acetyl-CoA; acetyl-CoA from myo-inositol: step 5/7. Catalyzes the phosphorylation of 5-dehydro-2-deoxy-D-gluconate (2-deoxy-5-keto-D-gluconate or DKG) to 6-phospho-5-dehydro-2-deoxy-D-gluconate (DKGP). The sequence is that of 5-dehydro-2-deoxygluconokinase from Clostridium perfringens (strain ATCC 13124 / DSM 756 / JCM 1290 / NCIMB 6125 / NCTC 8237 / Type A).